The sequence spans 190 residues: Protein GrpE (190 aa).

Residues 21–49 (DDLQEEVEATETEETVEEVIEETPEKSEL) are disordered. Positions 23–42 (LQEEVEATETEETVEEVIEE) are enriched in acidic residues.

It belongs to the GrpE family. Homodimer.

It is found in the cytoplasm. Its function is as follows. Participates actively in the response to hyperosmotic and heat shock by preventing the aggregation of stress-denatured proteins, in association with DnaK and GrpE. It is the nucleotide exchange factor for DnaK and may function as a thermosensor. Unfolded proteins bind initially to DnaJ; upon interaction with the DnaJ-bound protein, DnaK hydrolyzes its bound ATP, resulting in the formation of a stable complex. GrpE releases ADP from DnaK; ATP binding to DnaK triggers the release of the substrate protein, thus completing the reaction cycle. Several rounds of ATP-dependent interactions between DnaJ, DnaK and GrpE are required for fully efficient folding. The polypeptide is Protein GrpE (Streptococcus pyogenes serotype M3 (strain SSI-1)).